The chain runs to 625 residues: Protein arginine N-methyltransferase skb1 (625 aa).

Residues 280-588 (LQVPLQPLSY…WRLTDGMRVW (309 aa)) form the SAM-dependent MTase PRMT-type domain. S-adenosyl-L-methionine contacts are provided by residues Tyr296, 305–306 (KY), Glu359, and 386–387 (DM). Catalysis depends on proton donor/acceptor residues Glu402 and Glu411.

It belongs to the class I-like SAM-binding methyltransferase superfamily. Protein arginine N-methyltransferase family. Interacts with the N-terminal regulatory domain of shk1. Shk1, cdc42 and skb1 are able to form a ternary complex in vivo. Interacts with orb6. Interacts with Cdr1 and the Cdr1 inhibitory target Wee1.

The protein localises to the nucleus. It localises to the cell tip. The protein resides in the cell septum. Its subcellular location is the cytoplasm. It is found in the cell cortex. Functionally, S-adenosyl-L-methionine-dependent protein-arginine N-methyltransferase that can catalyze both the mono- and symmetric (type II) dimethylation of the guanidino nitrogens of arginine residues in target proteins. Delays mitotic entry by inhibiting the Cdr1-Wee1 signaling pathway. Cortical nodes sequester Skb1 from its regulatory targets Cdr1 and Wee1. Positively modulates the shk1 kinase function. May be a mediator of hyperosmotic stress response. Involved in the control of cell polarity by regulating the subcellular localization of Orb6 kinase. The chain is Protein arginine N-methyltransferase skb1 from Schizosaccharomyces pombe (strain 972 / ATCC 24843) (Fission yeast).